Here is a 201-residue protein sequence, read N- to C-terminus: Small ribosomal subunit protein uS4c (201 aa).

The region spanning 89 to 157 (MRLDNILFRL…VQNYIASSDP (69 aa)) is the S4 RNA-binding domain.

It belongs to the universal ribosomal protein uS4 family. As to quaternary structure, part of the 30S ribosomal subunit. Contacts protein S5. The interaction surface between S4 and S5 is involved in control of translational fidelity.

Its subcellular location is the plastid. The protein localises to the chloroplast. Its function is as follows. One of the primary rRNA binding proteins, it binds directly to 16S rRNA where it nucleates assembly of the body of the 30S subunit. In terms of biological role, with S5 and S12 plays an important role in translational accuracy. The sequence is that of Small ribosomal subunit protein uS4c (rps4) from Hordeum vulgare (Barley).